The following is a 441-amino-acid chain: Protein translocase subunit SecY (441 aa).

10 consecutive transmembrane segments (helical) span residues 24–44, 77–97, 123–143, 152–172, 181–201, 215–235, 272–292, 313–333, 373–393, and 397–417; these read LFVL…VPGI, ILAL…LLAT, ATVV…PNML, FSFY…LMWL, IGNG…PSAI, PLVL…VVFV, VMPA…TQWF, PLYL…YTAM, LIGG…TSAW, and FYFG…FIVQ.

Belongs to the SecY/SEC61-alpha family. As to quaternary structure, component of the Sec protein translocase complex. Heterotrimer consisting of SecY, SecE and SecG subunits. The heterotrimers can form oligomers, although 1 heterotrimer is thought to be able to translocate proteins. Interacts with the ribosome. Interacts with SecDF, and other proteins may be involved. Interacts with SecA.

The protein resides in the cell inner membrane. Functionally, the central subunit of the protein translocation channel SecYEG. Consists of two halves formed by TMs 1-5 and 6-10. These two domains form a lateral gate at the front which open onto the bilayer between TMs 2 and 7, and are clamped together by SecE at the back. The channel is closed by both a pore ring composed of hydrophobic SecY resides and a short helix (helix 2A) on the extracellular side of the membrane which forms a plug. The plug probably moves laterally to allow the channel to open. The ring and the pore may move independently. The protein is Protein translocase subunit SecY of Haemophilus influenzae (strain ATCC 51907 / DSM 11121 / KW20 / Rd).